The chain runs to 540 residues: MAERSQTAPEAGNDTGNEDAIGGNVNKYIVLPNGYSGQPKKGHLTFDACFESGNLGRVEQVSDFEYDLFIRPDTCNPRFRVWFNFTVENVKELQRVIFNIVNFSKTKSLYRDGMAPMVKSTSRPKWQRLPPKNVYYYRCPDHRKNYVMSFAFCFDREDDIYQFAYCYPYTYTRFQHYLDSLQKKNMDYFFREQLGQSVQQRQLDLLTITSPENLREGSEKKVIFITGRVHPGETPSSFVCQGIIDFLVSQHPIARVLREHLVFKIAPMLNPDGVYLGNYRCSLMGFDLNRHWLDPSPWAHPTLHGVKQLIIKMYNDPKTSLEFYIDIHAHSTMMNGFMYGNIFEDEERFQRQSIFPKLLCQNAEDFSYTSTSFNRDAVKAGTGRRFLGGLLDHSSYCYTLEVSFYSYIIGGTTAAVPYTEEAYMKLGRNVARTFLDYYRLNSLVEKIAVPMPRLRSKEERRLGWEHPSCLRAEQPLEVLGIPMCSGKALNEHLGNDIQWHLDCGSSTLPLGLISCSPSSSASWNDMAMSNSILLPDHSFH.

Residues 167 to 438 (YPYTYTRFQH…NVARTFLDYY (272 aa)) enclose the Peptidase M14 domain. His230, Glu233, and His328 together coordinate Zn(2+). Glu401 acts as the Proton donor/acceptor in catalysis.

It belongs to the peptidase M14 family. As to quaternary structure, interacts with MYLK. It depends on Zn(2+) as a cofactor. As to expression, widely expressed. Expressed abundantly in testis, pituitary and brain and to a lower extent in eye, stomach, adrenal and kidney. In brain, expressed at low level in cerebellum as compared to cortex.

It localises to the cytoplasm. It is found in the cytosol. The protein resides in the cytoskeleton. Its subcellular location is the microtubule organizing center. The protein localises to the centrosome. It localises to the centriole. It is found in the golgi apparatus. The protein resides in the cilium basal body. The catalysed reaction is (L-glutamyl)(n+1)-gamma-L-glutamyl-L-glutamyl-[protein] + H2O = (L-glutamyl)(n)-gamma-L-glutamyl-L-glutamyl-[protein] + L-glutamate. The enzyme catalyses C-terminal L-alpha-aminoacyl-L-glutamyl-L-glutamyl-[tubulin] + H2O = C-terminal L-alpha-aminoacyl-L-glutamyl-[tubulin] + L-glutamate. In terms of biological role, metallocarboxypeptidase that mediates protein deglutamylation of tubulin and non-tubulin target proteins. Catalyzes the removal of polyglutamate side chains present on the gamma-carboxyl group of glutamate residues within the C-terminal tail of tubulin protein. Specifically cleaves tubulin long-side-chains, while it is not able to remove the branching point glutamate. Also catalyzes the removal of polyglutamate residues from the carboxy-terminus of non-tubulin proteins such as MYLK. Mediates the deglutamylation of nucleotidyltransferase CGAS, leading to CGAS antiviral defense response activation. Involved in KLF4 deglutamylation which promotes KLF4 proteasome-mediated degradation, thereby negatively regulating cell pluripotency maintenance and embryogenesis. This Mus musculus (Mouse) protein is Cytosolic carboxypeptidase 6.